The sequence spans 674 residues: Phosphopantothenoylcysteine decarboxylase subunit VHS3 (674 aa).

5 disordered regions span residues 1 to 164 (MTNK…SILS), 190 to 230 (LNSD…RPSV), 348 to 368 (QHNSIDTSFNSTNSNAGNITG), 384 to 426 (TSSN…SNVV), and 575 to 674 (VSAG…LQRS). The segment covering 15–81 (ASNTLSGAEQ…TSGAVVSNTP (67 aa)) has biased composition (polar residues). Position 90 is a phosphothreonine (Thr-90). A compositionally biased stretch (polar residues) spans 106–116 (EQTPPNQVARQ). Over residues 137–150 (NLKDINTKVPKDGE) the composition is skewed to basic and acidic residues. Residues 152-164 (SASSFSTPTSILS) show a composition bias toward polar residues. The segment covering 198–212 (SPRKEHPHFYVEDPL) has biased composition (basic and acidic residues). Over residues 214 to 230 (TPSVRSRSNSTSPRPSV) the composition is skewed to low complexity. The span at 351–368 (SIDTSFNSTNSNAGNITG) shows a compositional bias: polar residues. Positions 384–395 (TSSNSAASQTNN) are enriched in low complexity. A compositionally biased stretch (polar residues) spans 403-426 (MASTTGFPSTLGGSRTYSNSSNVV). The segment covering 580 to 591 (EEEEDEDNDEED) has biased composition (acidic residues). The span at 592–602 (DNKKNDTGGKD) shows a compositional bias: basic and acidic residues. Acidic residues predominate over residues 603–660 (EDNDDDDDDDDDDDDDDDDDDDDDDDDDDDDDDDDDDDDDDDDDDDDDEDDEDEDEDD). The span at 661–674 (EGKKKEDKGGLQRS) shows a compositional bias: basic and acidic residues.

This sequence belongs to the HFCD (homooligomeric flavin containing Cys decarboxylase) superfamily. Interacts with the C-terminal domain of PPZ1. Component of the phosphopantothenoylcysteine decarboxylase (PPCDC) complex, a heterotrimer composed of CAB3, SIS2 and VHS3.

Its function is as follows. Component of the phosphopantothenoylcysteine decarboxylase (PPCDC) involved in the coenzyme A synthesis. Acts as an inhibitory subunit of protein phosphatase PPZ1, which is involved in many cellular processes such as G1-S transition or salt tolerance. This chain is Phosphopantothenoylcysteine decarboxylase subunit VHS3 (VHS3), found in Saccharomyces cerevisiae (strain ATCC 204508 / S288c) (Baker's yeast).